Here is a 175-residue protein sequence, read N- to C-terminus: Orotate phosphoribosyltransferase (175 aa).

Residues arginine 88, lysine 89, lysine 92, and 114-122 (EDVVTTARG) contribute to the 5-phospho-alpha-D-ribose 1-diphosphate site. Orotate contacts are provided by threonine 118 and arginine 146.

This sequence belongs to the purine/pyrimidine phosphoribosyltransferase family. PyrE subfamily. As to quaternary structure, homodimer. Requires Mg(2+) as cofactor.

The catalysed reaction is orotidine 5'-phosphate + diphosphate = orotate + 5-phospho-alpha-D-ribose 1-diphosphate. It functions in the pathway pyrimidine metabolism; UMP biosynthesis via de novo pathway; UMP from orotate: step 1/2. Its function is as follows. Catalyzes the transfer of a ribosyl phosphate group from 5-phosphoribose 1-diphosphate to orotate, leading to the formation of orotidine monophosphate (OMP). This chain is Orotate phosphoribosyltransferase, found in Methanocella arvoryzae (strain DSM 22066 / NBRC 105507 / MRE50).